Reading from the N-terminus, the 181-residue chain is Putative poly [ADP-ribose] polymerase-like 100L (181 aa).

The PARP catalytic domain maps to 1–181; it reads MDNLKEEETN…KIKYIIHITK (181 aa).

The enzyme catalyses NAD(+) + (ADP-D-ribosyl)n-acceptor = nicotinamide + (ADP-D-ribosyl)n+1-acceptor + H(+).. The polypeptide is Putative poly [ADP-ribose] polymerase-like 100L (Invertebrate iridescent virus 6 (IIV-6)).